We begin with the raw amino-acid sequence, 344 residues long: Dihydroorotase (344 aa).

Zn(2+)-binding residues include His13 and His15. Substrate-binding positions include 15-17 (HLR) and Asn41. Lys99, His136, and His174 together coordinate Zn(2+). At Lys99 the chain carries N6-carboxylysine. His136 serves as a coordination point for substrate. Residue Leu219 coordinates substrate. Asp247 contributes to the Zn(2+) binding site. The active site involves Asp247. The substrate site is built by His251 and Ala263.

This sequence belongs to the metallo-dependent hydrolases superfamily. DHOase family. Class II DHOase subfamily. In terms of assembly, homodimer. It depends on Zn(2+) as a cofactor.

It catalyses the reaction (S)-dihydroorotate + H2O = N-carbamoyl-L-aspartate + H(+). It participates in pyrimidine metabolism; UMP biosynthesis via de novo pathway; (S)-dihydroorotate from bicarbonate: step 3/3. Catalyzes the reversible cyclization of carbamoyl aspartate to dihydroorotate. The chain is Dihydroorotase from Acinetobacter baumannii (strain AB307-0294).